Here is a 552-residue protein sequence, read N- to C-terminus: Dihydroxy-acid dehydratase (552 aa).

Residue Asp78 coordinates Mg(2+). [2Fe-2S] cluster is bound at residue Cys119. Positions 120 and 121 each coordinate Mg(2+). Lys121 is modified (N6-carboxylysine). Residue Cys190 coordinates [2Fe-2S] cluster. Position 441 (Glu441) interacts with Mg(2+). The active-site Proton acceptor is Ser467.

Belongs to the IlvD/Edd family. Homodimer. It depends on [2Fe-2S] cluster as a cofactor. Mg(2+) serves as cofactor.

The catalysed reaction is (2R)-2,3-dihydroxy-3-methylbutanoate = 3-methyl-2-oxobutanoate + H2O. It catalyses the reaction (2R,3R)-2,3-dihydroxy-3-methylpentanoate = (S)-3-methyl-2-oxopentanoate + H2O. It participates in amino-acid biosynthesis; L-isoleucine biosynthesis; L-isoleucine from 2-oxobutanoate: step 3/4. It functions in the pathway amino-acid biosynthesis; L-valine biosynthesis; L-valine from pyruvate: step 3/4. Its function is as follows. Functions in the biosynthesis of branched-chain amino acids. Catalyzes the dehydration of (2R,3R)-2,3-dihydroxy-3-methylpentanoate (2,3-dihydroxy-3-methylvalerate) into 2-oxo-3-methylpentanoate (2-oxo-3-methylvalerate) and of (2R)-2,3-dihydroxy-3-methylbutanoate (2,3-dihydroxyisovalerate) into 2-oxo-3-methylbutanoate (2-oxoisovalerate), the penultimate precursor to L-isoleucine and L-valine, respectively. The sequence is that of Dihydroxy-acid dehydratase from Ignicoccus hospitalis (strain KIN4/I / DSM 18386 / JCM 14125).